The sequence spans 850 residues: Ras GTPase-activating protein 2 (850 aa).

Over residues 1–24 (MAAAAPAAAAASSEAPAASATAEP) the composition is skewed to low complexity. Positions 1–32 (MAAAAPAAAAASSEAPAASATAEPEAGDQDSR) are disordered. Residue Ala2 is modified to N-acetylalanine. 2 C2 domains span residues 20–138 (ATAE…ETWF) and 149–289 (VQGK…QAWY). The Ras-GAP domain occupies 372–589 (DKLVPFATAV…IAVKKFLDEI (218 aa)). Position 555 is a phosphoserine (Ser555). The PH domain occupies 604 to 706 (VHLKEGEMYK…WIDVLCRVSR (103 aa)). Residues 708–744 (NQNRLSFYHPSVYLNGNWLCCQETGENTLGCKPCTAG) form a Btk-type zinc finger. Residues His716, Cys727, Cys728, and Cys738 each contribute to the Zn(2+) site. The segment at 825–850 (HEKYRKKRSSSAKYGSKENPIVGKAS) is disordered.

It is found in the cytoplasm. It localises to the perinuclear region. In terms of biological role, inhibitory regulator of the Ras-cyclic AMP pathway. Binds inositol tetrakisphosphate (IP4). This Homo sapiens (Human) protein is Ras GTPase-activating protein 2 (RASA2).